The chain runs to 47 residues: Conotoxin Bu10 (47 aa).

Positions 1–22 (DSRGTQLHRALRKATILSVSAR) are excised as a propeptide. 3 disulfide bridges follow: Cys-23/Cys-37, Cys-30/Cys-41, and Cys-36/Cys-46. At Cys-46 the chain carries Cysteine amide.

Belongs to the conotoxin O1 superfamily. In terms of tissue distribution, expressed by the venom duct.

The protein localises to the secreted. This Conus bullatus (Bubble cone) protein is Conotoxin Bu10.